The primary structure comprises 33 residues: Mu-theraphotoxin-Ssp1a (33 aa).

Disulfide bonds link Cys2/Cys17, Cys9/Cys22, and Cys16/Cys29. Leu33 carries the leucine amide modification.

The protein belongs to the neurotoxin 10 (Hwtx-1) family. 22 (Htx-4) subfamily. Expressed by the venom gland.

It localises to the secreted. Functionally, gating modifier toxin that traps voltage-sensing domain II of voltage-gated sodium channels in the resting state without significantly altering the voltage-dependence of activation and inactivation, or delay in recovery from inactivation. Inhibits hNav1.7/SCN9A (IC(50)=134 nM), followed in rank order of potency by Nav1.6/SCN8A (IC(50)=191 nM), Nav1.2/SCN2A (IC(50)=239 nM), Nav1.3/SCN3A (IC(50)=547 nM) and Nav1.1/SCN1A (IC(50)=674 nM). Its binding to Nav1.2, Nav1.3 and Nav1.7 is slowly reversible and incomplete, with ~25% of Nav1.2, ~50% of Nav1.3 and ~40% of Nav1.7 channels recovering from block after a 30 minutes washout, respectively. Binds in the aqueous cleft formed between the S1-S2 and S3-S4 loops of each channel subtype, primarily targeting the S3-S4 loop. The protein is Mu-theraphotoxin-Ssp1a of Selenotypus sp. (Feather-legged tarantula).